Reading from the N-terminus, the 213-residue chain is LexA repressor (213 aa).

A DNA-binding region (H-T-H motif) is located at residues 27-47 (QTEIARAFGFKGIRAAQYHLE). Residues S133 and K170 each act as for autocatalytic cleavage activity in the active site.

It belongs to the peptidase S24 family. As to quaternary structure, homodimer.

The catalysed reaction is Hydrolysis of Ala-|-Gly bond in repressor LexA.. Represses a number of genes involved in the response to DNA damage (SOS response), including recA and lexA. Has been shown to bind to the palindromic sequence 5'-CTG-N(8-12)-C-[TC]-G. In the presence of single-stranded DNA, RecA interacts with LexA causing an autocatalytic cleavage which disrupts the DNA-binding part of LexA, leading to derepression of the SOS regulon and eventually DNA repair. This Xanthomonas citri (Xanthomonas campestris pv. citri) protein is LexA repressor.